The primary structure comprises 145 residues: Type II secretion system core protein G (145 aa).

Residues 1-9 constitute a propeptide, leader sequence; that stretch reads MRATDKQRG. N-methylphenylalanine is present on Phe10. A helical membrane pass occupies residues 10 to 30; sequence FTLLEIMVVIVIIGVLASLVV. A disordered region spans residues 123-145; the sequence is AGPDGEMGTEDDITNWGLSKKKK.

It belongs to the GSP G family. In terms of assembly, type II secretion system is composed of four main components: the outer membrane complex, the inner membrane complex, the cytoplasmic secretion ATPase and the periplasm-spanning pseudopilus. Forms homomultimers. Cleaved by the prepilin peptidase. In terms of processing, methylated by prepilin peptidase at the amino group of the N-terminal phenylalanine once the leader sequence is cleaved.

It is found in the cell inner membrane. In terms of biological role, core component of the type II secretion system required for the energy-dependent secretion of extracellular factors such as proteases and toxins from the periplasm. Pseudopilin (pilin-like) protein that polymerizes to form the pseudopilus. Further polymerization triggers pseudopilus growth. This is Type II secretion system core protein G (gspG) from Escherichia coli (strain K12).